The chain runs to 1272 residues: AF4/FMR2 family member 2 (1272 aa).

3 disordered regions span residues I93 to D183, Q201 to A225, and A283 to K302. A compositionally biased stretch (polar residues) spans S97–E107. The segment covering S151–H160 has biased composition (basic and acidic residues). Over residues N161–D183 the composition is skewed to polar residues. S391 carries the post-translational modification Phosphoserine. Disordered stretches follow at residues K418–L491, T535–E687, S779–K829, and P842–N903. Positions V426–A438 are enriched in pro residues. A compositionally biased stretch (low complexity) spans V439–E452. T478 carries the phosphothreonine modification. Over residues E543–R558 the composition is skewed to basic and acidic residues. The span at S576–T586 shows a compositional bias: polar residues. A compositionally biased stretch (basic and acidic residues) spans P616 to R629. Positions G630–A640 are enriched in basic residues. Basic and acidic residues predominate over residues P818–K829. 2 stretches are compositionally biased toward pro residues: residues C844 to P853 and F874 to E883.

It belongs to the AF4 family.

It is found in the nucleus speckle. In terms of biological role, RNA-binding protein. Might be involved in alternative splicing regulation through an interaction with G-quartet RNA structure. This chain is AF4/FMR2 family member 2 (AFF2), found in Pan troglodytes (Chimpanzee).